Reading from the N-terminus, the 215-residue chain is MVLQTMIVRVADSLPLAASMQEDEQSGRDLQKYQSQAKQLCRKLNEQSPARCTLEAGKMCFHYVIEKGVCYLALCEAGFPKKLAFAYLEDLEGEFSEQYGAKVPSVSRPYSFIEFDTYIQKTIKSYIDSRARRNLGNINSELHDVQRIMVANIEEVLQRGEALSALDSKASNLSSLSKKYRSDAKYLNTRSTYAKVAAGAVIIITLIIYVRFWWL.

Residues 1-190 (MVLQTMIVRV…RSDAKYLNTR (190 aa)) lie on the Cytoplasmic side of the membrane. In terms of domain architecture, Longin spans 6-119 (MIVRVADSLP…YSFIEFDTYI (114 aa)). In terms of domain architecture, v-SNARE coiled-coil homology spans 134–194 (NLGNINSELH…KYLNTRSTYA (61 aa)). The chain crosses the membrane as a helical span at residues 191-213 (STYAKVAAGAVIIITLIIYVRFW). Residues 214–215 (WL) are Lumenal-facing.

Belongs to the synaptobrevin family. In terms of assembly, component of 2 distinct SNARE complexes.

It localises to the endoplasmic reticulum membrane. It is found in the endoplasmic reticulum-Golgi intermediate compartment membrane. The protein resides in the golgi apparatus. Its subcellular location is the cis-Golgi network membrane. The protein localises to the trans-Golgi network membrane. It localises to the melanosome. In terms of biological role, SNARE involved in targeting and fusion of ER-derived transport vesicles with the Golgi complex as well as Golgi-derived retrograde transport vesicles with the ER. This chain is Vesicle-trafficking protein SEC22b-A, found in Danio rerio (Zebrafish).